Reading from the N-terminus, the 249-residue chain is Metallo-beta-lactamase type 2 (249 aa).

A signal peptide spans 1–22 (MLKRLKGLLVLALGFTGLQVFG). Residues His-98, His-100, Asp-102, His-161, and Cys-180 each contribute to the Zn(2+) site. Lys-183 contacts substrate. Residue His-222 coordinates Zn(2+).

This sequence belongs to the metallo-beta-lactamase superfamily. Class-B beta-lactamase family. As to quaternary structure, monomer. Zn(2+) is required as a cofactor.

It localises to the periplasm. The catalysed reaction is a beta-lactam + H2O = a substituted beta-amino acid. Its function is as follows. Confers resistance to the different beta-lactams antibiotics (penicillin, cephalosporin and carbapenem) via the hydrolysis of the beta-lactam ring. In Elizabethkingia meningoseptica (Chryseobacterium meningosepticum), this protein is Metallo-beta-lactamase type 2 (blaB5).